A 341-amino-acid polypeptide reads, in one-letter code: HTH-type transcriptional repressor PurR (341 aa).

Residues 2–56 (ATIKDVAKHAGVSTTTVSHVINKTRFVAENTKAAVWAAIKELHYSPSAVARSLKV) enclose the HTH lacI-type domain. Residues 4 to 23 (IKDVAKHAGVSTTTVSHVIN) constitute a DNA-binding region (H-T-H motif). The DNA-binding element occupies 48-56 (SAVARSLKV). Hypoxanthine is bound by residues Tyr73, Arg190, Thr192, Phe221, and Asp275.

As to quaternary structure, homodimer.

It functions in the pathway purine metabolism; purine nucleotide biosynthesis [regulation]. Is the main repressor of the genes involved in the de novo synthesis of purine nucleotides, regulating purB, purC, purEK, purF, purHD, purL, purMN and guaBA expression. PurR is allosterically activated to bind its cognate DNA by binding the purine corepressors, hypoxanthine or guanine, thereby effecting transcription repression. This Yersinia enterocolitica serotype O:8 / biotype 1B (strain NCTC 13174 / 8081) protein is HTH-type transcriptional repressor PurR.